The primary structure comprises 124 residues: Tax1-binding protein 3 (124 aa).

An N-acetylserine modification is found at Ser-2. The region spanning 15 to 112 (RVEIHKLRQG…EVVRLLVTRQ (98 aa)) is the PDZ domain. Ser-61 carries the phosphoserine modification.

As to quaternary structure, interacts (via its PDZ domain) with GLS2. Interacts (via its PDZ domain) with RTKN (via the C-terminal region); this interaction facilitates Rho-mediated activation of the FOS serum response element (SRE). Interacts (via PDZ domain) with ARHGEF16. Interacts (via PDZ domain) with KCNJ4 (via C-terminus). Competes with LIN7A for KCNJ4 binding. Interacts (via its PDZ domain) with CTNNB1; this interaction inhibits the transcriptional activity of CTNNB1. Interacts with ADGRB2.

Its subcellular location is the cytoplasm. The protein localises to the nucleus. It localises to the cell membrane. In terms of biological role, may regulate a number of protein-protein interactions by competing for PDZ domain binding sites. Binds CTNNB1 and may thereby act as an inhibitor of the Wnt signaling pathway. Competes with LIN7A for KCNJ4 binding, and thereby promotes KCNJ4 internalization. May play a role in the Rho signaling pathway. In Mus musculus (Mouse), this protein is Tax1-binding protein 3.